A 363-amino-acid chain; its full sequence is Serpentine receptor class beta-17 (363 aa).

The next 7 helical transmembrane spans lie at 46 to 66 (AFLL…GSII), 75 to 95 (LLAF…SCFL), 120 to 140 (VILA…SMLC), 169 to 189 (IGFV…LYMY), 214 to 234 (YIFI…IGLY), 273 to 293 (CAQL…RIFL), and 304 to 324 (VTEF…ICIV).

It belongs to the nematode receptor-like protein srb family.

It localises to the membrane. This chain is Serpentine receptor class beta-17 (srb-17), found in Caenorhabditis elegans.